A 415-amino-acid polypeptide reads, in one-letter code: Protein ROH1A (415 aa).

The disordered stretch occupies residues 184–219 (VSGGGGGGGGGNKTTERSWSFGRRSGGSSAASKGGA). The span at 185–195 (SGGGGGGGGGN) shows a compositional bias: gly residues. Residues 200–219 (RSWSFGRRSGGSSAASKGGA) are compositionally biased toward low complexity. Residues 263–283 (MFIMSTVMVFVMWVLTAAVPC) form a helical membrane-spanning segment.

It belongs to the ROH1 family. In terms of assembly, interacts with EXO70A1 and EXO70C1. Binds to EXO70C2. In terms of tissue distribution, mainly expressed in cells expanding in a polar manner such as pollen and root hairs.

It localises to the membrane. The protein localises to the cytoplasm. It is found in the cytosol. In terms of biological role, required for seed coat mucilage deposition. This is Protein ROH1A from Arabidopsis thaliana (Mouse-ear cress).